The primary structure comprises 711 residues: Ribosomal RNA large subunit methyltransferase K/L (711 aa).

Residues 42–153 (DAQRAVLWSR…KGRATISVDL (112 aa)) form the THUMP domain.

The protein belongs to the methyltransferase superfamily. RlmKL family.

Its subcellular location is the cytoplasm. It carries out the reaction guanosine(2445) in 23S rRNA + S-adenosyl-L-methionine = N(2)-methylguanosine(2445) in 23S rRNA + S-adenosyl-L-homocysteine + H(+). The enzyme catalyses guanosine(2069) in 23S rRNA + S-adenosyl-L-methionine = N(2)-methylguanosine(2069) in 23S rRNA + S-adenosyl-L-homocysteine + H(+). Functionally, specifically methylates the guanine in position 2445 (m2G2445) and the guanine in position 2069 (m7G2069) of 23S rRNA. This Xanthomonas campestris pv. campestris (strain 8004) protein is Ribosomal RNA large subunit methyltransferase K/L.